A 160-amino-acid polypeptide reads, in one-letter code: Large ribosomal subunit protein uL13 (160 aa).

It belongs to the universal ribosomal protein uL13 family. As to quaternary structure, part of the 50S ribosomal subunit.

This protein is one of the early assembly proteins of the 50S ribosomal subunit, although it is not seen to bind rRNA by itself. It is important during the early stages of 50S assembly. This is Large ribosomal subunit protein uL13 from Orientia tsutsugamushi (strain Ikeda) (Rickettsia tsutsugamushi).